We begin with the raw amino-acid sequence, 330 residues long: MATFPVVDMDLINGEERAATLEKINDACENWGFFELVNHGISTELLDTVEKMNKDHYKKTMEQRFKEMVAAKGLEAVQSEIHYLDWESTFFLRHLPSSNISEIPDLEEDYRKTMKEFAVELEKLAEKLLDLLCENLGLEKGYLKKAFYGSKGPNFGTKVSNYPPCPKPDLIKGLRAHTDAGGIILLFQDDKVSGLQLLKDGEWMDVPPVHHSIVINLGDQIEVITNGKYKSIMHRVIAQSDGTRMSIASFYNPGDDAFISPAPALLEEKSEVSPTYPKFLFDDYMKLYSGLKFQAKEPRFEAMKARETTPVETARGLRAVRWNTTKRNQN.

The 101-residue stretch at 153–253 (PNFGTKVSNY…RMSIASFYNP (101 aa)) folds into the Fe2OG dioxygenase domain. Positions 177, 179, and 234 each coordinate Fe cation.

It belongs to the iron/ascorbate-dependent oxidoreductase family. Monomer. Requires Fe cation as cofactor.

The enzyme catalyses 1-aminocyclopropane-1-carboxylate + L-ascorbate + O2 = ethene + L-dehydroascorbate + hydrogen cyanide + CO2 + 2 H2O. It functions in the pathway alkene biosynthesis; ethylene biosynthesis via S-adenosyl-L-methionine; ethylene from S-adenosyl-L-methionine: step 2/2. The protein is 1-aminocyclopropane-1-carboxylate oxidase 2 (ACO2) of Malus domestica (Apple).